A 446-amino-acid polypeptide reads, in one-letter code: Scytalone dehydratase-like protein Arp1 (446 aa).

Tyrosine 323 is a substrate binding site. Residues histidine 358 and histidine 383 contribute to the active site. Asparagine 404 contacts substrate.

The protein belongs to the scytalone dehydratase family. In terms of assembly, homotrimer. Each subunit contains an active site, located in the central part of the hydrophobic core of the monomer, which functions independently.

Scytalone dehydratase-like protein; part of the Pks2 gene cluster that mediates the formation of infectious structures (appressoria), enabling these fungi to kill insects faster. The product of the Pks2 gene cluster is different from the one of Pks1 and has still not been identified. This Metarhizium acridum (strain CQMa 102) protein is Scytalone dehydratase-like protein Arp1.